The sequence spans 301 residues: Protein FdhE homolog (301 aa).

It belongs to the FdhE family.

It localises to the cytoplasm. Its function is as follows. Necessary for formate dehydrogenase activity. This is Protein FdhE homolog from Shewanella baltica (strain OS185).